A 397-amino-acid polypeptide reads, in one-letter code: Succinyl-diaminopimelate desuccinylase (397 aa).

His-73 contacts Zn(2+). The active site involves Asp-75. A Zn(2+)-binding site is contributed by Asp-106. Residue Glu-140 is the Proton acceptor of the active site. Glu-141, Glu-169, and His-366 together coordinate Zn(2+).

Belongs to the peptidase M20A family. DapE subfamily. In terms of assembly, homodimer. The cofactor is Zn(2+). Requires Co(2+) as cofactor.

It carries out the reaction N-succinyl-(2S,6S)-2,6-diaminopimelate + H2O = (2S,6S)-2,6-diaminopimelate + succinate. It functions in the pathway amino-acid biosynthesis; L-lysine biosynthesis via DAP pathway; LL-2,6-diaminopimelate from (S)-tetrahydrodipicolinate (succinylase route): step 3/3. Its function is as follows. Catalyzes the hydrolysis of N-succinyl-L,L-diaminopimelic acid (SDAP), forming succinate and LL-2,6-diaminopimelate (DAP), an intermediate involved in the bacterial biosynthesis of lysine and meso-diaminopimelic acid, an essential component of bacterial cell walls. This chain is Succinyl-diaminopimelate desuccinylase, found in Sinorhizobium medicae (strain WSM419) (Ensifer medicae).